The following is a 384-amino-acid chain: Sensor protein VanS (384 aa).

The next 2 helical transmembrane spans lie at 21–41 (MYIV…RSMI) and 76–96 (IDIF…RVML). One can recognise a Histidine kinase domain in the interval 161-376 (YLAHDIKTPL…TFRVELPAMP (216 aa)). His-164 carries the phosphohistidine; by autocatalysis modification. Positions 221–384 (QTITLTKTHI…MPDLVDKRRS (164 aa)) are involved in low-affinity ATP-binding. Exhibits higher affinity for ATP than GTP.

Autophosphorylated.

Its subcellular location is the membrane. It catalyses the reaction ATP + protein L-histidine = ADP + protein N-phospho-L-histidine.. Its activity is regulated as follows. Phosphorylation of VanR inhibited by EDTA. Its function is as follows. Member of the two-component regulatory system VanS/VanR. Functions as a sensor protein kinase which is autophosphorylated at a histidine residue in response to environmental stimuli, such as glycopeptide antibiotics. VanS transfers its phosphate group to transcriptional regulatory protein VanR, thereby modulating expression of target genes. Binds directly to, and autophosphorylation activity is enhanced by, the glycopeptides vancomycin and teicoplanin, in vitro. However it has also been reported that autophosphorylation, phosphate transfer to VanR and dephosphorylation of phospho-VanR are all unaffected by the presence of vancomycin, in vitro. In the absence of vancomycin, negatively regulates VanR-mediated activation of vanS, vanH, vanA and vanX, probably as a result of dephosphorylating phospho-VanR. May inhibit promoter-specific DNA binding by VanR. Involved in conferring vancomycin resistance. In Enterococcus faecium (Streptococcus faecium), this protein is Sensor protein VanS.